A 68-amino-acid polypeptide reads, in one-letter code: Large ribosomal subunit protein bL32 (68 aa).

The protein belongs to the bacterial ribosomal protein bL32 family.

The protein is Large ribosomal subunit protein bL32 of Orientia tsutsugamushi (strain Ikeda) (Rickettsia tsutsugamushi).